Reading from the N-terminus, the 49-residue chain is Large ribosomal subunit protein bL36 (49 aa).

This sequence belongs to the bacterial ribosomal protein bL36 family.

This Delftia acidovorans (strain DSM 14801 / SPH-1) protein is Large ribosomal subunit protein bL36.